Here is a 213-residue protein sequence, read N- to C-terminus: Phosphatidylethanolamine N-methyltransferase A (213 aa).

The Lumenal portion of the chain corresponds to 1 to 21 (MIVEHAIDYIDYLMNYVDFTE). Positions 22–42 (KYFLLTIACVVFNPTWWNITA) form an intramembrane region, helical. Residues 43 to 54 (RMEYKTKFMTKI) lie on the Lumenal side of the membrane. Residues 55-75 (CGSKENGCYLLAFLIFSLGIL) form a helical membrane-spanning segment. Residues 76 to 102 (RDWLFSEALIRQPIFQEFDRFEVEVLS) lie on the Cytoplasmic side of the membrane. Residues 103 to 123 (YILYGFGGILVLAAYLKLGIT) form a helical membrane-spanning segment. 107 to 109 (GFG) serves as a coordination point for S-adenosyl-L-methionine. Over 124–166 (GTYLGDYFGILMKERVTGFPFNVMNNPMYNGSVMLFIAHALSY) the chain is Lumenal. Residues 167–187 (KSVAGLVLSFVVYVVYKFALI) form a helical membrane-spanning segment. The Cytoplasmic segment spans residues 188 to 213 (FEESFTNYIYSTAAANAAKKNKSKSK). 189–190 (EE) contacts S-adenosyl-L-methionine.

Belongs to the class VI-like SAM-binding methyltransferase superfamily. PEMT/PEM2 methyltransferase family.

The protein resides in the endoplasmic reticulum membrane. Its subcellular location is the mitochondrion membrane. The enzyme catalyses a 1,2-diacyl-sn-glycero-3-phospho-N-methylethanolamine + S-adenosyl-L-methionine = a 1,2-diacyl-sn-glycero-3-phospho-N,N-dimethylethanolamine + S-adenosyl-L-homocysteine + H(+). It carries out the reaction a 1,2-diacyl-sn-glycero-3-phospho-N,N-dimethylethanolamine + S-adenosyl-L-methionine = a 1,2-diacyl-sn-glycero-3-phosphocholine + S-adenosyl-L-homocysteine + H(+). It catalyses the reaction a 1,2-diacyl-sn-glycero-3-phosphoethanolamine + S-adenosyl-L-methionine = a 1,2-diacyl-sn-glycero-3-phospho-N-methylethanolamine + S-adenosyl-L-homocysteine + H(+). The protein operates within phospholipid metabolism; phosphatidylcholine biosynthesis. In terms of biological role, catalyzes the three sequential steps of the methylation pathway of phosphatidylcholine biosynthesis, the SAM-dependent methylation of phosphatidylethanolamine (PE) to phosphatidylmonomethylethanolamine (PMME), PMME to phosphatidyldimethylethanolamine (PDME), and PDME to phosphatidylcholine (PC). In Dictyostelium discoideum (Social amoeba), this protein is Phosphatidylethanolamine N-methyltransferase A (pemtA).